A 465-amino-acid chain; its full sequence is 5'-adenylylsulfate reductase 1, chloroplastic (465 aa).

A chloroplast-targeting transit peptide spans 1–53; the sequence is MAMSVNVSSSSSSGIINSRFGVSLEPKVSQIGSLRLLDRVHVAPVSLNLSGKR. The reductase domain stretch occupies residues 73-327; the sequence is LAATMVAEIA…KAKECGLHKG (255 aa). Residues 344-465 form the Thioredoxin domain; that stretch reads SAVADIFKSE…SLTSFLNLVR (122 aa). Residues cysteine 385 and cysteine 388 each act as nucleophile in the active site. An intrachain disulfide couples cysteine 385 to cysteine 388.

The protein belongs to the APS reductase family. It depends on [4Fe-4S] cluster as a cofactor. As to expression, leaves, roots and stem.

The protein resides in the plastid. The protein localises to the chloroplast. It catalyses the reaction glutathione disulfide + sulfite + AMP + 2 H(+) = adenosine 5'-phosphosulfate + 2 glutathione. Its activity is regulated as follows. Stimulated by sodium sulfate &gt; ammonium sulfate and is sensitive to inactivation by 5'AMP. Reduces sulfate for Cys biosynthesis. Substrate preference is adenosine-5'-phosphosulfate (APS) &gt;&gt; 3'-phosphoadenosine-5'-phosphosulfate (PAPS). Uses glutathione or DTT as source of protons. The chain is 5'-adenylylsulfate reductase 1, chloroplastic (APR1) from Arabidopsis thaliana (Mouse-ear cress).